Here is a 146-residue protein sequence, read N- to C-terminus: UPF0178 protein BCE33L2782 (146 aa).

This sequence belongs to the UPF0178 family.

This Bacillus cereus (strain ZK / E33L) protein is UPF0178 protein BCE33L2782.